The following is a 186-amino-acid chain: Fucolectin-6 (186 aa).

Residues 1–32 (MKTCNLTDRMKVKMIMLLFQILAISTLQSVSA) form the signal peptide. Residues 40–186 (QENVAVRGKA…VEVNAMLPAN (147 aa)) form an F5/8 type C-like region. N67, D70, N72, and S81 together coordinate Ca(2+). Cystine bridges form between C82/C175, C114/C115, and C137/C153. 2 residues coordinate alpha-L-fucose: H84 and R111. A Cell attachment site motif is present at residues 111 to 113 (RGD). R118 provides a ligand contact to alpha-L-fucose. C175 and E176 together coordinate Ca(2+).

The protein belongs to the fucolectin family. In terms of assembly, homotrimer. As to expression, gill mucous cells.

It localises to the secreted. Functionally, acts as a defensive agent. Recognizes blood group fucosylated oligosaccharides including A, B, H and Lewis B-type antigens. Does not recognize Lewis A antigen and has low affinity for monovalent haptens. This Anguilla japonica (Japanese eel) protein is Fucolectin-6.